The primary structure comprises 250 residues: tRNA (guanine-N(1)-)-methyltransferase (250 aa).

S-adenosyl-L-methionine contacts are provided by residues Gly115 and 135–140 (LGDFVL).

This sequence belongs to the RNA methyltransferase TrmD family. In terms of assembly, homodimer.

The protein resides in the cytoplasm. The catalysed reaction is guanosine(37) in tRNA + S-adenosyl-L-methionine = N(1)-methylguanosine(37) in tRNA + S-adenosyl-L-homocysteine + H(+). Its function is as follows. Specifically methylates guanosine-37 in various tRNAs. This is tRNA (guanine-N(1)-)-methyltransferase from Legionella pneumophila subsp. pneumophila (strain Philadelphia 1 / ATCC 33152 / DSM 7513).